The primary structure comprises 140 residues: PDZ domain-containing protein 11 (140 aa).

The PDZ domain maps to 47–129 (IVTLKKPPGA…ISMRVRFFPY (83 aa)).

In terms of assembly, interacts with ATP2B1, ATP2B2, ATP2B3, ATP2B4 and ATP7A. Interacts with PLEKHA7 (via WW domains) at zonula adherens; this interaction is essential for the interaction between PLEKHA7 and the ADAM10-binding protein TSPAN33. Interacts with SLC5A6.

The protein localises to the cytoplasm. The protein resides in the cell junction. Its subcellular location is the adherens junction. It localises to the cell membrane. Mediates docking of ADAM10 to zonula adherens by interacting with PLEKHA7 which is required for PLEKHA7 to interact with the ADAM10-binding protein TSPAN33. In Bos taurus (Bovine), this protein is PDZ domain-containing protein 11 (PDZD11).